We begin with the raw amino-acid sequence, 89 residues long: UPF0297 protein SUB1776 (89 aa).

It belongs to the UPF0297 family.

This is UPF0297 protein SUB1776 from Streptococcus uberis (strain ATCC BAA-854 / 0140J).